Here is a 192-residue protein sequence, read N- to C-terminus: A-type ATP synthase subunit E (192 aa).

The disordered stretch occupies residues 1 to 66 (MSLDTVVEDI…QERDQKLSSA (66 aa)). Basic and acidic residues predominate over residues 8–26 (EDIRDEARARADEIRSEGE). Over residues 27 to 49 (ERAEEIIDEAEREADDIVDEAER) the composition is skewed to acidic residues. Residues 50 to 66 (EAERKISQERDQKLSSA) show a composition bias toward basic and acidic residues.

It belongs to the V-ATPase E subunit family. As to quaternary structure, has multiple subunits with at least A(3), B(3), C, D, E, F, H, I and proteolipid K(x).

It localises to the cell membrane. Functionally, component of the A-type ATP synthase that produces ATP from ADP in the presence of a proton gradient across the membrane. The sequence is that of A-type ATP synthase subunit E from Natronomonas pharaonis (strain ATCC 35678 / DSM 2160 / CIP 103997 / JCM 8858 / NBRC 14720 / NCIMB 2260 / Gabara) (Halobacterium pharaonis).